Here is a 318-residue protein sequence, read N- to C-terminus: Cytochrome c biogenesis protein CcsA (318 aa).

The next 8 helical transmembrane spans lie at 17–37, 45–65, 75–95, 104–124, 149–169, 224–244, 258–275, and 287–307; these read VLAL…ISFW, SAVV…QLVL, ISNL…AQLL, IVSA…SFAL, VIMC…AVLF, TITV…VWAN, TWAL…HTRF, and VAVA…LLGI.

It belongs to the CcmF/CycK/Ccl1/NrfE/CcsA family. In terms of assembly, may interact with ccs1.

The protein localises to the cellular thylakoid membrane. Its function is as follows. Required during biogenesis of c-type cytochromes (cytochrome c6 and cytochrome f) at the step of heme attachment. In Prochlorococcus marinus (strain MIT 9303), this protein is Cytochrome c biogenesis protein CcsA.